The following is a 226-amino-acid chain: PKHD-type hydroxylase Bind_0236 (226 aa).

Residues T78–S178 form the Fe2OG dioxygenase domain. H96, D98, and H159 together coordinate Fe cation. R169 provides a ligand contact to 2-oxoglutarate.

Fe(2+) is required as a cofactor. Requires L-ascorbate as cofactor.

This chain is PKHD-type hydroxylase Bind_0236, found in Beijerinckia indica subsp. indica (strain ATCC 9039 / DSM 1715 / NCIMB 8712).